Reading from the N-terminus, the 619-residue chain is Teichoic acid poly(ribitol-phosphate) polymerase (619 aa).

Belongs to the CDP-glycerol glycerophosphotransferase family.

The protein localises to the cell membrane. It catalyses the reaction 4-O-[1-D-ribitylphospho-(2R)-1-glycerylphospho]-N-acetyl-beta-D-mannosaminyl-(1-&gt;4)-N-acetyl-alpha-D-glucosaminyl di-trans,octa-cis-undecaprenyl diphosphate + n CDP-L-ribitol = 4-O-[(D-ribitylphospho)(n)-D-ribitylphospho-(2R)-glycerylphospho]-N-acetyl-beta-D-mannosaminyl-(1-&gt;4)-N-acetyl-alpha-D-glucosaminyl di-trans,octa-cis-undecaprenyl diphosphate + n CMP + n H(+). The protein operates within cell wall biogenesis; poly(ribitol phosphate) teichoic acid biosynthesis. Functionally, responsible for the polymerization of the main chain of the major teichoic acid by sequential transfer of ribitol phosphate units from CDP-ribitol to the glycerol phosphate attached to the disaccharide linkage unit. Synthesizes polymers of up to 40 ribitol phosphate units in length. The sequence is that of Teichoic acid poly(ribitol-phosphate) polymerase (tarL) from Bacillus spizizenii (strain ATCC 23059 / NRRL B-14472 / W23) (Bacillus subtilis subsp. spizizenii).